Here is a 479-residue protein sequence, read N- to C-terminus: UPF0164 protein TP_0865 (479 aa).

The first 49 residues, 1-49 (MVRMRRRRACSSGGACGCAAVRGARSFLSVRVLGMRIGMSALCLAPLFA), serve as a signal peptide directing secretion.

Belongs to the UPF0164 family.

The protein is UPF0164 protein TP_0865 of Treponema pallidum (strain Nichols).